We begin with the raw amino-acid sequence, 653 residues long: Endoglin (653 aa).

The N-terminal stretch at 1 to 26 (MDRGVLPLPITLLFVIYSFVPTTGLA) is a signal peptide. Residues 27 to 47 (ERVGCDLQPVDPTRGEVTFTT) form an OR1, N-terminal part region. Residues 27-337 (ERVGCDLQPV…SSCGGVFQTT (311 aa)) are required for interaction with GDF2. The Extracellular portion of the chain corresponds to 27–581 (ERVGCDLQPV…IVSPDLSGKG (555 aa)). Disulfide bonds link Cys31/Cys209, Cys54/Cys184, Cys244/Cys330, Cys350/Cys382, Cys363/Cys442, Cys394/Cys412, and Cys493/Cys549. Positions 48–201 (SQVSEGCVAQ…MGATLEWQPR (154 aa)) are OR2. N-linked (GlcNAc...) asparagine glycosylation is found at Asn89, Asn135, and Asn266. The OR1, C-terminal part stretch occupies residues 202–330 (AQTPVQSCRL…SNVSLRASSC (129 aa)). The interval 270 to 282 (QILTTGEYSVKIF) is essential for interaction with GDF2. Asn307 and Asn322 each carry an N-linked (GlcNAc...) asparagine glycan. Residues 363–510 (CGNQVMTLAL…GDMVELIQSR (148 aa)) form the ZP domain. A helical transmembrane segment spans residues 582–606 (LVLPSVLGITFGAFLIGALLTAALW). At 607 to 653 (YIYSHTRGPSKREPVVAVAAPASSESSSTNHSIGSTQSTPCSTSSMA) the chain is on the cytoplasmic side. The span at 624–634 (VAAPASSESSS) shows a compositional bias: low complexity. The disordered stretch occupies residues 624 to 653 (VAAPASSESSSTNHSIGSTQSTPCSTSSMA). Polar residues predominate over residues 635–653 (TNHSIGSTQSTPCSTSSMA). 2 positions are modified to phosphoserine; by TGFBR1: Ser641 and Ser644.

Homodimer; disulfide-linked. Forms a heteromeric complex with the signaling receptors for transforming growth factor-beta: TGFBR1 and/or TGFBR2. Interacts with TGFB1. It is able to bind TGFB1 and TGFB2 with high affinity, but not TGFB3. Interacts with GDF2, forming a heterotetramer with a 2:2 stoichiometry. Interacts with ACVRL1. Can form a heteromeric complex with GDF2 and ACVRL1. Interacts with BMP10. Interacts with DYNLT4. Interacts with ARRB2. In terms of tissue distribution, detected on blood vessels (at protein level). Detected on adult pulmonary artery, capillaries supporting the heart muscle and lung alveolar capillary endothelial cells. Endoglin is restricted to endothelial cells in all tissues except bone marrow and is also found in stromal cells within the connective tissue of intestine, stomach, heart, skeletal muscle, uterus, ovary, oviduct, testis and thymus.

It is found in the cell membrane. Functionally, vascular endothelium glycoprotein that plays an important role in the regulation of angiogenesis. Required for normal structure and integrity of adult vasculature. Regulates the migration of vascular endothelial cells. Required for normal extraembryonic angiogenesis and for embryonic heart development. May regulate endothelial cell shape changes in response to blood flow, which drive vascular remodeling and establishment of normal vascular morphology during angiogenesis. May play a role in the binding of endothelial cells to integrins. Acts as a TGF-beta coreceptor and is involved in the TGF-beta/BMP signaling cascade that ultimately leads to the activation of SMAD transcription factors. Required for GDF2/BMP9 signaling through SMAD1 in endothelial cells and modulates TGFB1 signaling through SMAD3. The chain is Endoglin (Eng) from Mus musculus (Mouse).